Reading from the N-terminus, the 284-residue chain is Large ribosomal subunit protein uL2 (284 aa).

Disordered stretches follow at residues 28 to 50 (ELKG…FKKS) and 232 to 284 (RGTA…DRRK). Residues 36–46 (RSVRPNKKLSF) show a composition bias toward basic residues. The span at 240–250 (DHPHGGGEGRH) shows a compositional bias: basic and acidic residues. Residues 264 to 284 (KGLKTRDKRKSNKWIVKDRRK) are compositionally biased toward basic residues.

It belongs to the universal ribosomal protein uL2 family. In terms of assembly, part of the 50S ribosomal subunit. Forms a bridge to the 30S subunit in the 70S ribosome.

Its function is as follows. One of the primary rRNA binding proteins. Required for association of the 30S and 50S subunits to form the 70S ribosome, for tRNA binding and peptide bond formation. It has been suggested to have peptidyltransferase activity; this is somewhat controversial. Makes several contacts with the 16S rRNA in the 70S ribosome. This chain is Large ribosomal subunit protein uL2, found in Chlamydia trachomatis serovar L2 (strain ATCC VR-902B / DSM 19102 / 434/Bu).